Reading from the N-terminus, the 448-residue chain is N-succinylarginine dihydrolase (448 aa).

Residues 19–28 (AGLSSGNIAS), N110, and 137–138 (HR) each bind substrate. E174 is an active-site residue. Residue R216 coordinates substrate. H252 is a catalytic residue. Residues D254 and N366 each contribute to the substrate site. C372 functions as the Nucleophile in the catalytic mechanism.

Belongs to the succinylarginine dihydrolase family. As to quaternary structure, homodimer.

The catalysed reaction is N(2)-succinyl-L-arginine + 2 H2O + 2 H(+) = N(2)-succinyl-L-ornithine + 2 NH4(+) + CO2. Its pathway is amino-acid degradation; L-arginine degradation via AST pathway; L-glutamate and succinate from L-arginine: step 2/5. Catalyzes the hydrolysis of N(2)-succinylarginine into N(2)-succinylornithine, ammonia and CO(2). The sequence is that of N-succinylarginine dihydrolase from Legionella pneumophila (strain Corby).